Reading from the N-terminus, the 510-residue chain is MDPHKKVALETEFFTEYGEASRYQIQEVIGKGSYGVVASAIDTHSGEKVAIKKINDVFEHVSDATRILREIKLLRLLRHPDIVEIKHVMLPPSRREFRDIYVVFELMESDLHQVIKANDDLTPEHYQFFLYQLLRGLKFIHTANVFHRDLKPKNILANSDCKLKICDFGLARVSFNDAPSAIFWTDYVATRWYRAPELCGSFFSKYTPAIDIWSIGCIFAEMLTGKPLFPGKNVVHQLDIMTDLLGTPPPEAIARIRNEKARRYLGNMRRKPPVPFTHKFPHVDPLALRLLHRLLAFDPKDRPSAEEALADPYFYGLANVDREPSTQPIPKLEFEFERRKITKEDVRELIYREILEYHPQMLQEYLRGGEQTSFMYPSGVDRFKRQFAHLEENYGKGEKGSPLQRQHASLPRERVPAPKKENGSHNHDIENRSIASLVTTLESPPTSQHEGSDYRNGTSQTGYSARSLLKSASISASKCIGMKPRNKSEYGESNNDTVDALSQKVAALHT.

Residues 23 to 314 (YQIQEVIGKG…AEEALADPYF (292 aa)) enclose the Protein kinase domain. Residues 29–37 (IGKGSYGVV) and Lys-52 contribute to the ATP site. Residue Asp-149 is the Proton acceptor of the active site. Residue Thr-185 is modified to Phosphothreonine. The short motif at 185-187 (TDY) is the TXY element. Position 187 is a phosphotyrosine (Tyr-187). The residue at position 190 (Thr-190) is a Phosphothreonine. The interval 393-461 (NYGKGEKGSP…SDYRNGTSQT (69 aa)) is disordered. Residues 410 to 431 (LPRERVPAPKKENGSHNHDIEN) are compositionally biased toward basic and acidic residues. Polar residues predominate over residues 433–461 (SIASLVTTLESPPTSQHEGSDYRNGTSQT).

It belongs to the protein kinase superfamily. CMGC Ser/Thr protein kinase family. MAP kinase subfamily. In terms of processing, dually phosphorylated on Thr-185 and Tyr-187, which activates the enzyme.

It catalyses the reaction L-seryl-[protein] + ATP = O-phospho-L-seryl-[protein] + ADP + H(+). The catalysed reaction is L-threonyl-[protein] + ATP = O-phospho-L-threonyl-[protein] + ADP + H(+). With respect to regulation, activated by threonine and tyrosine phosphorylation. The polypeptide is Mitogen-activated protein kinase 9 (MPK9) (Arabidopsis thaliana (Mouse-ear cress)).